The primary structure comprises 726 residues: Mitotic spindle checkpoint protein MAD1 (726 aa).

Positions 1-30 (MILRTPQPKRLRSDAGESPFPTGATGSGNQ) are disordered. 2 coiled-coil regions span residues 68 to 246 (ADVL…LKLI) and 272 to 625 (SDNS…VFAD).

The protein belongs to the MAD1 family. Homodimer. Part of the mitotic checkpoint complex (MCC). Interacts with MAD2 and NUA.

The protein resides in the nucleus envelope. Required for the execution of the mitotic checkpoint which monitors the process of kinetochore-spindle attachment and delays the onset of anaphase when this process is not complete. It inhibits the activity of the anaphase promoting complex by sequestering CDC20 until all chromosomes are aligned at the metaphase plate. Required for anchoring MAD2 to the nuclear envelope. In Arabidopsis thaliana (Mouse-ear cress), this protein is Mitotic spindle checkpoint protein MAD1.